The following is a 30-amino-acid chain: Uperin-6.2 (30 aa).

As to expression, expressed by the skin dorsal glands.

Its subcellular location is the secreted. This Uperoleia inundata (Floodplain toadlet) protein is Uperin-6.2.